Consider the following 151-residue polypeptide: Peptide methionine sulfoxide reductase MsrB (151 aa).

Residues 9–132 enclose the MsrB domain; that stretch reads DGELKRTLTK…NSAALKFIPF (124 aa). The Nucleophile role is filled by C121.

This sequence belongs to the MsrB Met sulfoxide reductase family.

The enzyme catalyses L-methionyl-[protein] + [thioredoxin]-disulfide + H2O = L-methionyl-(R)-S-oxide-[protein] + [thioredoxin]-dithiol. This Mycoplasma pneumoniae (strain ATCC 29342 / M129 / Subtype 1) (Mycoplasmoides pneumoniae) protein is Peptide methionine sulfoxide reductase MsrB.